Reading from the N-terminus, the 607-residue chain is Leucine-rich repeat-containing protein 63 (607 aa).

LRR repeat units follow at residues 357-378, 380-401, 403-424, 426-447, 449-470, 471-497, and 498-524; these read QLVY…VLYL, NLQV…IQQL, YLRK…LFCL, YLEE…IQKL, SLEK…ILKL, NLVK…NPPR, and LTHI…VVQK.

The protein is Leucine-rich repeat-containing protein 63 (Lrrc63) of Rattus norvegicus (Rat).